A 65-amino-acid polypeptide reads, in one-letter code: Cytochrome b-c1 complex subunit 9, mitochondrial (65 aa).

Residues 14–34 (IYVATIFGGAFAFQGFFDVAV) traverse the membrane as a helical segment.

The protein belongs to the UQCR10/QCR9 family. In terms of assembly, component of the ubiquinol-cytochrome c oxidoreductase (cytochrome b-c1 complex, complex III, CIII), a multisubunit enzyme composed of 10 subunits. The complex is composed of 3 respiratory subunits cytochrome b (COB), cytochrome c1 (CYT1) and Rieske protein (RIP1), 2 core protein subunits COR1 and QCR2, and 5 low-molecular weight protein subunits QCR6, QCR7, QCR8, QCR9 and QCR10. The complex exists as an obligatory dimer and forms supercomplexes (SCs) in the inner mitochondrial membrane with a monomer or a dimer of cytochrome c oxidase (complex IV, CIV), resulting in 2 different assemblies (supercomplexes III(2)IV and III(2)IV(2)).

The protein resides in the membrane. It is found in the mitochondrion inner membrane. Functionally, component of the ubiquinol-cytochrome c oxidoreductase, a multisubunit transmembrane complex that is part of the mitochondrial electron transport chain which drives oxidative phosphorylation. The complex plays an important role in the uptake of multiple carbon sources present in different host niches. This Candida albicans (strain SC5314 / ATCC MYA-2876) (Yeast) protein is Cytochrome b-c1 complex subunit 9, mitochondrial.